Consider the following 261-residue polypeptide: uncharacterized protein (261 aa).

Belongs to the PaiB family.

This is an uncharacterized protein from Aspergillus fumigatus (strain ATCC MYA-4609 / CBS 101355 / FGSC A1100 / Af293) (Neosartorya fumigata).